Consider the following 440-residue polypeptide: 3-phosphoshikimate 1-carboxyvinyltransferase (440 aa).

3-phosphoshikimate is bound by residues K26, S27, and R31. K26 contributes to the phosphoenolpyruvate binding site. Phosphoenolpyruvate is bound by residues G99 and R127. Residues S172, Q174, D320, and K347 each coordinate 3-phosphoshikimate. Q174 is a phosphoenolpyruvate binding site. D320 functions as the Proton acceptor in the catalytic mechanism. Phosphoenolpyruvate is bound by residues R351 and R392.

Belongs to the EPSP synthase family. As to quaternary structure, monomer.

It localises to the cytoplasm. It carries out the reaction 3-phosphoshikimate + phosphoenolpyruvate = 5-O-(1-carboxyvinyl)-3-phosphoshikimate + phosphate. It functions in the pathway metabolic intermediate biosynthesis; chorismate biosynthesis; chorismate from D-erythrose 4-phosphate and phosphoenolpyruvate: step 6/7. Catalyzes the transfer of the enolpyruvyl moiety of phosphoenolpyruvate (PEP) to the 5-hydroxyl of shikimate-3-phosphate (S3P) to produce enolpyruvyl shikimate-3-phosphate and inorganic phosphate. This is 3-phosphoshikimate 1-carboxyvinyltransferase from Xanthomonas oryzae pv. oryzae (strain MAFF 311018).